Reading from the N-terminus, the 447-residue chain is N-succinylarginine dihydrolase (447 aa).

Substrate contacts are provided by residues 21 to 30 (AGLAHGNVAS), N112, and 139 to 140 (HR). E176 is a catalytic residue. R215 serves as a coordination point for substrate. Residue H251 is part of the active site. Residues D253 and N364 each coordinate substrate. Residue C370 is the Nucleophile of the active site.

This sequence belongs to the succinylarginine dihydrolase family. As to quaternary structure, homodimer.

It catalyses the reaction N(2)-succinyl-L-arginine + 2 H2O + 2 H(+) = N(2)-succinyl-L-ornithine + 2 NH4(+) + CO2. Its pathway is amino-acid degradation; L-arginine degradation via AST pathway; L-glutamate and succinate from L-arginine: step 2/5. Its function is as follows. Catalyzes the hydrolysis of N(2)-succinylarginine into N(2)-succinylornithine, ammonia and CO(2). This is N-succinylarginine dihydrolase from Chromohalobacter salexigens (strain ATCC BAA-138 / DSM 3043 / CIP 106854 / NCIMB 13768 / 1H11).